Consider the following 252-residue polypeptide: NAC domain-containing protein 23 (252 aa).

Residues 12-177 (MPPGFRFQPT…EMVLCRISNK (166 aa)) enclose the NAC domain. A DNA-binding region spans residues 110–183 (TAVKRRFVFY…ISNKDLPKPP (74 aa)). Positions 225–252 (VDDAAAGTDDPGDLDEEIDDSMQRNHGG) are disordered. Acidic residues predominate over residues 234-244 (DPGDLDEEIDD).

Forms heterodimers with NAC26. As to expression, expressed in stems and panicles. Expressed in developing endosperm.

It localises to the nucleus. Its subcellular location is the cytoplasm. In terms of biological role, transcription factor involved in the regulation of seed size. Binds to DNA-specific sequences of CLPD1 and OAT promoters in vitro. The protein is NAC domain-containing protein 23 of Oryza sativa subsp. japonica (Rice).